Consider the following 957-residue polypeptide: Glycine dehydrogenase (decarboxylating) (957 aa).

N6-(pyridoxal phosphate)lysine is present on K708.

It belongs to the GcvP family. In terms of assembly, the glycine cleavage system is composed of four proteins: P, T, L and H. The cofactor is pyridoxal 5'-phosphate.

It carries out the reaction N(6)-[(R)-lipoyl]-L-lysyl-[glycine-cleavage complex H protein] + glycine + H(+) = N(6)-[(R)-S(8)-aminomethyldihydrolipoyl]-L-lysyl-[glycine-cleavage complex H protein] + CO2. Functionally, the glycine cleavage system catalyzes the degradation of glycine. The P protein binds the alpha-amino group of glycine through its pyridoxal phosphate cofactor; CO(2) is released and the remaining methylamine moiety is then transferred to the lipoamide cofactor of the H protein. The polypeptide is Glycine dehydrogenase (decarboxylating) (Escherichia coli O8 (strain IAI1)).